The primary structure comprises 665 residues: Alpha-1,4-glucan:maltose-1-phosphate maltosyltransferase (665 aa).

3 residues coordinate alpha-maltose 1-phosphate: Lys255, Gln315, and Asp350. The active-site Nucleophile is Asp386. Position 387 (Asn387) interacts with alpha-maltose 1-phosphate. Residue Glu415 is the Proton donor of the active site. Residue 526-527 (KY) participates in alpha-maltose 1-phosphate binding.

Belongs to the glycosyl hydrolase 13 family. GlgE subfamily. As to quaternary structure, homodimer.

It carries out the reaction alpha-maltose 1-phosphate + [(1-&gt;4)-alpha-D-glucosyl](n) = [(1-&gt;4)-alpha-D-glucosyl](n+2) + phosphate. Its function is as follows. Maltosyltransferase that uses maltose 1-phosphate (M1P) as the sugar donor to elongate linear or branched alpha-(1-&gt;4)-glucans. Is involved in a branched alpha-glucan biosynthetic pathway from trehalose, together with TreS, Mak and GlgB. The chain is Alpha-1,4-glucan:maltose-1-phosphate maltosyltransferase from Myxococcus xanthus (strain DK1622).